A 365-amino-acid chain; its full sequence is 3-isopropylmalate dehydrogenase (365 aa).

Residue 80-91 coordinates NAD(+); sequence GPKWGTGEVRPE. Residues R98, R108, R137, and D226 each coordinate substrate. 3 residues coordinate Mg(2+): D226, D251, and D255. 290 to 301 lines the NAD(+) pocket; the sequence is GSAPDLPKNKVN.

This sequence belongs to the isocitrate and isopropylmalate dehydrogenases family. As to quaternary structure, homodimer. Mg(2+) is required as a cofactor. It depends on Mn(2+) as a cofactor.

It is found in the cytoplasm. The enzyme catalyses (2R,3S)-3-isopropylmalate + NAD(+) = 4-methyl-2-oxopentanoate + CO2 + NADH. It participates in amino-acid biosynthesis; L-leucine biosynthesis; L-leucine from 3-methyl-2-oxobutanoate: step 3/4. Catalyzes the oxidation of 3-carboxy-2-hydroxy-4-methylpentanoate (3-isopropylmalate) to 3-carboxy-4-methyl-2-oxopentanoate. The product decarboxylates to 4-methyl-2 oxopentanoate. The sequence is that of 3-isopropylmalate dehydrogenase (LEU2) from Candida boidinii (Yeast).